Here is a 376-residue protein sequence, read N- to C-terminus: Quinolinate synthase (376 aa).

Positions 57 and 78 each coordinate iminosuccinate. Position 123 (Cys123) interacts with [4Fe-4S] cluster. Iminosuccinate is bound by residues 149–151 (YAN) and Ser166. Cys210 provides a ligand contact to [4Fe-4S] cluster. Iminosuccinate contacts are provided by residues 236-238 (HPE) and Thr253. Cys307 provides a ligand contact to [4Fe-4S] cluster.

This sequence belongs to the quinolinate synthase family. Type 1 subfamily. [4Fe-4S] cluster is required as a cofactor.

Its subcellular location is the cytoplasm. It carries out the reaction iminosuccinate + dihydroxyacetone phosphate = quinolinate + phosphate + 2 H2O + H(+). It functions in the pathway cofactor biosynthesis; NAD(+) biosynthesis; quinolinate from iminoaspartate: step 1/1. In terms of biological role, catalyzes the condensation of iminoaspartate with dihydroxyacetone phosphate to form quinolinate. This is Quinolinate synthase from Paraburkholderia phymatum (strain DSM 17167 / CIP 108236 / LMG 21445 / STM815) (Burkholderia phymatum).